The following is a 126-amino-acid chain: Glycine cleavage system H protein (126 aa).

A Lipoyl-binding domain is found at 24–106 (TVTVGITDHA…YGEGWMYRIK (83 aa)). Residue lysine 65 is modified to N6-lipoyllysine.

Belongs to the GcvH family. The glycine cleavage system is composed of four proteins: P, T, L and H. (R)-lipoate serves as cofactor.

Functionally, the glycine cleavage system catalyzes the degradation of glycine. The H protein shuttles the methylamine group of glycine from the P protein to the T protein. The protein is Glycine cleavage system H protein of Psychrobacter sp. (strain PRwf-1).